The following is a 308-amino-acid chain: Methionyl-tRNA formyltransferase (308 aa).

110–113 lines the (6S)-5,6,7,8-tetrahydrofolate pocket; the sequence is SLLP.

This sequence belongs to the Fmt family.

It carries out the reaction L-methionyl-tRNA(fMet) + (6R)-10-formyltetrahydrofolate = N-formyl-L-methionyl-tRNA(fMet) + (6S)-5,6,7,8-tetrahydrofolate + H(+). Its function is as follows. Attaches a formyl group to the free amino group of methionyl-tRNA(fMet). The formyl group appears to play a dual role in the initiator identity of N-formylmethionyl-tRNA by promoting its recognition by IF2 and preventing the misappropriation of this tRNA by the elongation apparatus. This chain is Methionyl-tRNA formyltransferase, found in Neisseria gonorrhoeae (strain ATCC 700825 / FA 1090).